Reading from the N-terminus, the 69-residue chain is Protein transport protein Sec61 subunit gamma (69 aa).

Topologically, residues 1 to 32 (MDAVDSVVDPLREFAKDSVRLVKRCHKPDRKE) are cytoplasmic. The chain crosses the membrane as a helical span at residues 33 to 61 (FTKVAARTAIGFVVMGFVGFFVKLIFIPI). At 62–69 (NNIIVGSG) the chain is on the extracellular side.

It belongs to the SecE/SEC61-gamma family. Heterotrimeric complex composed of SEC61-alpha, SEC61-beta and SEC61-gamma.

It localises to the endoplasmic reticulum membrane. Functionally, necessary for protein translocation in the endoplasmic reticulum. The protein is Protein transport protein Sec61 subunit gamma of Oryza sativa subsp. japonica (Rice).